Consider the following 45-residue polypeptide: Psychimicin (45 aa).

Intrachain disulfides connect cysteine 10–cysteine 24, cysteine 14–cysteine 36, and cysteine 25–cysteine 42.

As to quaternary structure, monomer. Hemolymph.

The protein localises to the secreted. Functionally, has antimicrobial activity. Is particularly active against fungi, and to a lesser extent against Gram-positive and Gram-negative bacteria. This chain is Psychimicin, found in Oiketicus kirbyi (Bagworm moth).